We begin with the raw amino-acid sequence, 433 residues long: C4-dicarboxylate transport protein (433 aa).

A run of 8 helical transmembrane segments spans residues 8 to 28 (ILYV…HFWP), 44 to 64 (LIKM…IAGM), 78 to 98 (LLYF…AAHL), 148 to 168 (GDIL…AVLG), 188 to 208 (IVHV…AFTI), 222 to 242 (LIGT…GTIA), 307 to 327 (IYMT…LTLM), and 355 to 375 (AATL…ILGI).

The protein belongs to the dicarboxylate/amino acid:cation symporter (DAACS) (TC 2.A.23) family.

The protein localises to the cell inner membrane. Its function is as follows. Responsible for the transport of dicarboxylates such as succinate, fumarate, and malate from the periplasm across the membrane. This chain is C4-dicarboxylate transport protein, found in Cupriavidus taiwanensis (strain DSM 17343 / BCRC 17206 / CCUG 44338 / CIP 107171 / LMG 19424 / R1) (Ralstonia taiwanensis (strain LMG 19424)).